Here is a 69-residue protein sequence, read N- to C-terminus: Sec-independent protein translocase protein TatA (69 aa).

The chain crosses the membrane as a helical span at residues 1 to 21 (MFGLGGQELILILLIILLLFG).

It belongs to the TatA/E family. Forms a complex with TatC.

It localises to the cell inner membrane. Functionally, part of the twin-arginine translocation (Tat) system that transports large folded proteins containing a characteristic twin-arginine motif in their signal peptide across membranes. TatA could form the protein-conducting channel of the Tat system. In Chlorobium phaeovibrioides (strain DSM 265 / 1930) (Prosthecochloris vibrioformis (strain DSM 265)), this protein is Sec-independent protein translocase protein TatA.